Reading from the N-terminus, the 1062-residue chain is Suppressor of mar1-1 protein (1062 aa).

Positions M1–R17 are enriched in polar residues. Disordered stretches follow at residues M1–D27, E188–S217, T267–T337, S370–Q398, E595–G634, and S681–G804. N-acetylserine is present on S2. Over residues N189–R205 the composition is skewed to low complexity. Polar residues-rich tracts occupy residues T267–S279, S287–E298, and S305–I323. A compositionally biased stretch (basic residues) spans I325–K335. 2 stretches are compositionally biased toward polar residues: residues S370–S385 and T610–D629. S378, S379, S628, and S681 each carry phosphoserine. The segment covering A685–G699 has biased composition (basic and acidic residues). A Phosphothreonine modification is found at T697. Residues T704 to D716 are compositionally biased toward polar residues. S712 carries the post-translational modification Phosphoserine; by ATM or ATR. S738 is modified (phosphoserine). Residues K781–A793 show a composition bias toward polar residues. A Phosphothreonine modification is found at T817.

In terms of assembly, interacts with RFM1. This interaction is required to recruit HST1.

Its subcellular location is the nucleus. DNA-binding protein that specifically binds the regulatory region of middle sporulation genes (MSE). Required for the repression of middle sporulation genes during vegetative growth. Represses expression via the recruitment of histone deacetylase HST1. The polypeptide is Suppressor of mar1-1 protein (SUM1) (Saccharomyces cerevisiae (strain ATCC 204508 / S288c) (Baker's yeast)).